A 209-amino-acid polypeptide reads, in one-letter code: MVTIALPKGRLTEEATELFQRSSLISIDISQETRKLVLEDPRGNLRFLMVKPFDVPTYVEYGIADMGIVGKDVLLEVNKKVYELLDLKIGKCFIALAGPKGLREELLKKPEKIIATKFPNITKEYFENVLGEDVQIIKLNGSVELAPILGLSDMIVDIVESGRTLRENGLEVYEKLYDISARLIINRASLKLKREIEGIVNCLERMILQ.

This sequence belongs to the ATP phosphoribosyltransferase family. Short subfamily. As to quaternary structure, heteromultimer composed of HisG and HisZ subunits.

It is found in the cytoplasm. It catalyses the reaction 1-(5-phospho-beta-D-ribosyl)-ATP + diphosphate = 5-phospho-alpha-D-ribose 1-diphosphate + ATP. It participates in amino-acid biosynthesis; L-histidine biosynthesis; L-histidine from 5-phospho-alpha-D-ribose 1-diphosphate: step 1/9. In terms of biological role, catalyzes the condensation of ATP and 5-phosphoribose 1-diphosphate to form N'-(5'-phosphoribosyl)-ATP (PR-ATP). Has a crucial role in the pathway because the rate of histidine biosynthesis seems to be controlled primarily by regulation of HisG enzymatic activity. The polypeptide is ATP phosphoribosyltransferase (Caldicellulosiruptor saccharolyticus (strain ATCC 43494 / DSM 8903 / Tp8T 6331)).